Consider the following 783-residue polypeptide: Serine/threonine-protein kinase SIK1 (783 aa).

Residues 27 to 278 (YDIERTLGKG…IAQIRQHRWM (252 aa)) form the Protein kinase domain. ATP is bound by residues 33-41 (LGKGNFAVV) and K56. D149 (proton acceptor) is an active-site residue. Phosphothreonine; by LKB1 and GSK3-beta is present on T182. S186 carries the phosphoserine; by autocatalysis modification. The UBA domain maps to 303 to 343 (DYDEQALGIMQTLGVDRQRTVESLQNSSYNHFAAIYYLLLE). Residue T322 is modified to Phosphothreonine; by CaMK1. 2 disordered regions span residues 353–377 (CARPGPARQPRPRSSDLSGLEVPQE) and 449–477 (RQGPGLEEEQDTQESLPSSTGRRHTLAEV). Residue T473 is modified to Phosphothreonine; by PKA. Position 575 is a phosphoserine; by PKA (S575). The RK-rich region; required for cAMP responsiveness and nuclear localization stretch occupies residues 583–612 (LKAFRQQLRKTTRTKGFLGLNKIKGLARQV). Residues 619-643 (RASRGGLSPFHAPAQSPGLHGGAAG) form a disordered region.

It belongs to the protein kinase superfamily. CAMK Ser/Thr protein kinase family. AMPK subfamily. In terms of assembly, interacts with ATP1A1. Interacts (when phosphorylated on Thr-182 and Ser-186) with YWHAZ. Interacts (when phosphorylated at Thr-473 and/or Ser-575) with 14-3-3 proteins; the interaction inhibits kinase activity towards TORCs. There is a cooperative effect of the phosphorylation sites in 14-3-3 binding as the interaction is stronger when both Thr-473 and Ser-575 are modified. Mg(2+) is required as a cofactor. Post-translationally, phosphorylated at Thr-182 by STK11/LKB1 in complex with STE20-related adapter-alpha (STRADA) pseudo kinase and CAB39, leading to its activation. Phosphorylation at Thr-182 promotes autophosphorylation at Ser-186, which is required for sustained activity. Autophosphorylation at Ser-186 is maintained by sequential phosphorylation at Thr-182 by GSK3-beta. GSK3-beta cannot initiate phosphorylation at Thr-182, it can only maintain it. Phosphorylation at Ser-575 in response to cAMP signaling promotes translocation to the cytoplasm. Phosphorylation at Thr-322 by CaMK1 following intracellular sodium concentration leads to activation.

It localises to the cytoplasm. Its subcellular location is the nucleus. The catalysed reaction is L-seryl-[protein] + ATP = O-phospho-L-seryl-[protein] + ADP + H(+). The enzyme catalyses L-threonyl-[protein] + ATP = O-phospho-L-threonyl-[protein] + ADP + H(+). With respect to regulation, activated by phosphorylation on Thr-182. Also activated by phosphorylation on Thr-322 in response to increases in intracellular sodium in parallel with elevations in intracellular calcium through the reversible sodium/calcium exchanger. Inhibited by phosphorylation at Thr-473 and Ser-575, probably by PKA, which triggers interaction with 14-3-3 proteins. Functionally, serine/threonine-protein kinase involved in various processes such as cell cycle regulation, gluconeogenesis and lipogenesis regulation, muscle growth and differentiation and tumor suppression. Phosphorylates HDAC4, HDAC5, PPME1, SREBF1, CRTC1/TORC1. Inhibits CREB activity by phosphorylating and inhibiting activity of TORCs, the CREB-specific coactivators, like CRTC2/TORC2 and CRTC3/TORC3 in response to cAMP signaling. Acts as a tumor suppressor and plays a key role in p53/TP53-dependent anoikis, a type of apoptosis triggered by cell detachment: required for phosphorylation of p53/TP53 in response to loss of adhesion and is able to suppress metastasis. Part of a sodium-sensing signaling network, probably by mediating phosphorylation of PPME1: following increases in intracellular sodium, SIK1 is activated by CaMK1 and phosphorylates PPME1 subunit of protein phosphatase 2A (PP2A), leading to dephosphorylation of sodium/potassium-transporting ATPase ATP1A1 and subsequent increase activity of ATP1A1. Acts as a regulator of muscle cells by phosphorylating and inhibiting class II histone deacetylases HDAC4 and HDAC5, leading to promote expression of MEF2 target genes in myocytes. Also required during cardiomyogenesis by regulating the exit of cardiomyoblasts from the cell cycle via down-regulation of CDKN1C/p57Kip2. Acts as a regulator of hepatic gluconeogenesis by phosphorylating and repressing the CREB-specific coactivators CRTC1/TORC1 and CRTC2/TORC2, leading to inhibit CREB activity. Also regulates hepatic lipogenesis by phosphorylating and inhibiting SREBF1. In concert with CRTC1/TORC1, regulates the light-induced entrainment of the circadian clock by attenuating PER1 induction; represses CREB-mediated transcription of PER1 by phosphorylating and deactivating CRTC1/TORC1. This is Serine/threonine-protein kinase SIK1 (SIK1) from Homo sapiens (Human).